Here is a 76-residue protein sequence, read N- to C-terminus: Sec-independent protein translocase protein TatA (76 aa).

A helical transmembrane segment spans residues 1-21 (MGSFSIWHWLIVLVIVMLVFG). Basic and acidic residues-rich tracts occupy residues 41–50 (DGMKDGEDKG) and 57–76 (KELR…SRQQ). The disordered stretch occupies residues 41-76 (DGMKDGEDKGAQPAASKELRDSTTIDVDAKEKSRQQ).

Belongs to the TatA/E family. As to quaternary structure, the Tat system comprises two distinct complexes: a TatABC complex, containing multiple copies of TatA, TatB and TatC subunits, and a separate TatA complex, containing only TatA subunits. Substrates initially bind to the TatABC complex, which probably triggers association of the separate TatA complex to form the active translocon.

It localises to the cell inner membrane. In terms of biological role, part of the twin-arginine translocation (Tat) system that transports large folded proteins containing a characteristic twin-arginine motif in their signal peptide across membranes. TatA could form the protein-conducting channel of the Tat system. The polypeptide is Sec-independent protein translocase protein TatA (Cupriavidus taiwanensis (strain DSM 17343 / BCRC 17206 / CCUG 44338 / CIP 107171 / LMG 19424 / R1) (Ralstonia taiwanensis (strain LMG 19424))).